A 94-amino-acid polypeptide reads, in one-letter code: Phosphoribosyl-ATP pyrophosphatase (94 aa).

This sequence belongs to the PRA-PH family.

It is found in the cytoplasm. It catalyses the reaction 1-(5-phospho-beta-D-ribosyl)-ATP + H2O = 1-(5-phospho-beta-D-ribosyl)-5'-AMP + diphosphate + H(+). It functions in the pathway amino-acid biosynthesis; L-histidine biosynthesis; L-histidine from 5-phospho-alpha-D-ribose 1-diphosphate: step 2/9. This is Phosphoribosyl-ATP pyrophosphatase from Saccharolobus islandicus (strain Y.N.15.51 / Yellowstone #2) (Sulfolobus islandicus).